The primary structure comprises 96 residues: Class I hydrophobin 2 (96 aa).

The signal sequence occupies residues 1–15 (MFKALIVALAAVAAA). 4 disulfides stabilise this stretch: Cys28–Cys77, Cys34–Cys71, Cys35–Cys55, and Cys78–Cys91.

Belongs to the fungal hydrophobin family.

It is found in the secreted. It localises to the cell wall. In terms of biological role, aerial growth, conidiation, and dispersal of filamentous fungi in the environment rely upon a capability of their secreting small amphipathic proteins called hydrophobins (HPBs) with low sequence identity. Class I can self-assemble into an outermost layer of rodlet bundles on aerial cell surfaces, conferring cellular hydrophobicity that supports fungal growth, development and dispersal; whereas Class II form highly ordered films at water-air interfaces through intermolecular interactions but contribute nothing to the rodlet structure. Hyd2 plays a neglectable role in hyphal growth and asexual development and does not seem involved in cellular hydrophobicity, conidial adhesion, stress tolerance nor insect pathogenicity. The sequence is that of Class I hydrophobin 2 from Metarhizium robertsii (strain ARSEF 23 / ATCC MYA-3075) (Metarhizium anisopliae (strain ARSEF 23)).